Here is a 155-residue protein sequence, read N- to C-terminus: Endoribonuclease YbeY (155 aa).

His-120, His-124, and His-130 together coordinate Zn(2+).

Belongs to the endoribonuclease YbeY family. Zn(2+) serves as cofactor.

The protein resides in the cytoplasm. In terms of biological role, single strand-specific metallo-endoribonuclease involved in late-stage 70S ribosome quality control and in maturation of the 3' terminus of the 16S rRNA. In Alkaliphilus metalliredigens (strain QYMF), this protein is Endoribonuclease YbeY.